Consider the following 654-residue polypeptide: Endoplasmic reticulum chaperone BiP (654 aa).

Positions methionine 1–alanine 18 are cleaved as a signal peptide. The required for interaction with ELAPOR1 stretch occupies residues methionine 1 to alanine 80. Residue glycine 36–tyrosine 39 coordinates ATP. Serine 86 bears the Phosphoserine mark. An ATP-binding site is contributed by lysine 96. Position 125 is an N6-acetyllysine (lysine 125). Residues lysine 125–lysine 280 are nucleotide-binding (NBD). Tyrosine 160 is subject to 3'-nitrotyrosine. Lysine 213 is subject to N6-acetyllysine. Residue glycine 227–threonine 229 coordinates ATP. Lysine 271 carries the N6-acetyllysine modification. Glutamate 293–serine 300 serves as a coordination point for ATP. Lysine 326 carries the N6-acetyllysine modification. Residue lysine 352 forms a Glycyl lysine isopeptide (Lys-Gly) (interchain with G-Cter in SUMO2) linkage. Lysine 353 bears the N6-acetyllysine; alternate mark. A Glycyl lysine isopeptide (Lys-Gly) (interchain with G-Cter in SUMO1); alternate cross-link involves residue lysine 353. Glycine 364–arginine 367 is a binding site for ATP. The tract at residues glutamine 409–valine 419 is interdomain linker. Residues cysteine 420 to threonine 500 are substrate-binding (SBD). Lysine 447 carries the N6-succinyllysine modification. Position 492 is an omega-N-methylarginine (arginine 492). Threonine 518 bears the O-AMP-threonine; alternate mark. Residue threonine 518 is modified to Phosphothreonine; alternate. At lysine 585 the chain carries N6,N6,N6-trimethyllysine; by METTL21A; in vitro. The residue at position 585 (lysine 585) is an N6,N6-dimethyllysine; alternate. Lysine 585 carries the N6-methyllysine; alternate modification. An N6-methyllysine modification is found at lysine 591. A disordered region spans residues serine 632 to leucine 654. 2 positions are modified to phosphothreonine: threonine 643 and threonine 648. Positions glycine 644–leucine 654 are enriched in acidic residues. Serine 649 is subject to Phosphoserine. Residues arginine 651 to leucine 654 carry the Prevents secretion from ER motif.

This sequence belongs to the heat shock protein 70 family. In terms of assembly, monomer and homooligomer; homooligomerization via the interdomain linker inactivates the chaperone activity and acts as a storage of HSPA5/BiP molecules. Interacts with DNAJC1 (via J domain). Component of an EIF2 complex at least composed of CELF1/CUGBP1, CALR, CALR3, EIF2S1, EIF2S2, HSP90B1 and HSPA5. Part of a large chaperone multiprotein complex comprising DNAJB11, HSP90B1, HSPA5, HYOU, PDIA2, PDIA4, PDIA6, PPIB, SDF2L1, UGGT1 and very small amounts of ERP29, but not, or at very low levels, CALR nor CANX. Interacts with TMEM132A and TRIM21. May form a complex with ERLEC1, OS9, SEL1L and SYVN1. Interacts with DNAJC10. Interacts with DNAJB9/ERdj4; leading to recruit HSPA5/BiP to ERN1/IRE1. Interacts with ERN1/IRE1 (via luminal domain); the interaction takes place following interaction with DNAJB9/ERdj4 and leads to inactivate ERN1/IRE1, the interaction also competitively inhibits ERN1 interaction with MANF. Interacts directly with MANF (via SAP domain); the interaction inhibits ATP binding to HSPA5/BiP and subsequent nucleotide exchange. Interacts with EIF2AK3/PERK (via luminal domain); interaction leads to inactivate EIF2AK3/PERK. Interacts with MX1. Interacts with METTL23. Interacts with CEMIP; the interaction induces calcium leakage from the endoplasmic reticulum and cell migration. Interacts with PCSK4 form; the interaction takes place in the endoplasmic reticulum. Interacts with CIPC. Interacts with CCDC88B (via C-terminus); the interaction opposes ERN1-mediated JNK activation, protecting against apoptosis. Interacts with INPP5K; necessary for INPP5K localization at the endoplasmic reticulum. Interacts with MANF; the interaction is direct. Interacts with LOXL2; leading to activate the ERN1/IRE1-XBP1 pathway of the unfolded protein response. Interacts with CLU under stressed condition; interaction increases CLU protein stability; facilitates its retrotranslocation and redistribution to the mitochondria; cooperatively suppress stress-induced apoptosis by stabilizing mitochondrial membrane integrity. Interacts with CCDC47. Interacts with CLN3. Interacts with ELAPOR1; may regulate the function of HSPA5 in apoptosis and cell proliferation. Interacts with CASP7. Interacts with ILDR2; the interaction stabilizes ILDR2 expression. Interacts with ADAM7. In unstressed cells, AMPylation at Thr-518 by FICD inactivates the chaperome activity: AMPylated form is locked in a relatively inert state and only weakly stimulated by J domain-containing proteins. In response to endoplasmic reticulum stress, de-AMPylation by the same protein, FICD, restores the chaperone activity.

The protein localises to the endoplasmic reticulum lumen. It localises to the melanosome. The protein resides in the cytoplasm. It is found in the cell surface. It carries out the reaction ATP + H2O = ADP + phosphate + H(+). With respect to regulation, the chaperone activity is regulated by ATP-induced allosteric coupling of the nucleotide-binding (NBD) and substrate-binding (SBD) domains. In the ADP-bound and nucleotide-free (apo) states, the two domains have little interaction. In contrast, in the ATP-bound state the two domains are tightly coupled, which results in drastically accelerated kinetics in both binding and release of polypeptide substrates. J domain-containing co-chaperones (DNAJB9/ERdj4 or DNAJC10/ERdj5) stimulate the ATPase activity and are required for efficient substrate recognition by HSPA5/BiP. Homooligomerization inactivates participating HSPA5/BiP protomers and probably act as reservoirs to store HSPA5/BiP molecules when they are not needed by the cell. Endoplasmic reticulum chaperone that plays a key role in protein folding and quality control in the endoplasmic reticulum lumen. Involved in the correct folding of proteins and degradation of misfolded proteins via its interaction with DNAJC10/ERdj5, probably to facilitate the release of DNAJC10/ERdj5 from its substrate. Acts as a key repressor of the EIF2AK3/PERK and ERN1/IRE1-mediated unfolded protein response (UPR). In the unstressed endoplasmic reticulum, recruited by DNAJB9/ERdj4 to the luminal region of ERN1/IRE1, leading to disrupt the dimerization of ERN1/IRE1, thereby inactivating ERN1/IRE1. Also binds and inactivates EIF2AK3/PERK in unstressed cells. Accumulation of misfolded protein in the endoplasmic reticulum causes release of HSPA5/BiP from ERN1/IRE1 and EIF2AK3/PERK, allowing their homodimerization and subsequent activation. Plays an auxiliary role in post-translational transport of small presecretory proteins across endoplasmic reticulum (ER). May function as an allosteric modulator for SEC61 channel-forming translocon complex, likely cooperating with SEC62 to enable the productive insertion of these precursors into SEC61 channel. Appears to specifically regulate translocation of precursors having inhibitory residues in their mature region that weaken channel gating. May also play a role in apoptosis and cell proliferation. In Ictidomys tridecemlineatus (Thirteen-lined ground squirrel), this protein is Endoplasmic reticulum chaperone BiP.